A 462-amino-acid polypeptide reads, in one-letter code: Cysteine--tRNA ligase (462 aa).

Position 28 (cysteine 28) interacts with Zn(2+). The 'HIGH' region motif lies at 30 to 40 (ITVYDLCHIGH). Zn(2+) contacts are provided by cysteine 210, histidine 235, and glutamate 239. The 'KMSKS' region motif lies at 267-271 (KMSKS). An ATP-binding site is contributed by lysine 270.

It belongs to the class-I aminoacyl-tRNA synthetase family. In terms of assembly, monomer. Zn(2+) serves as cofactor.

The protein resides in the cytoplasm. It catalyses the reaction tRNA(Cys) + L-cysteine + ATP = L-cysteinyl-tRNA(Cys) + AMP + diphosphate. The protein is Cysteine--tRNA ligase of Erwinia tasmaniensis (strain DSM 17950 / CFBP 7177 / CIP 109463 / NCPPB 4357 / Et1/99).